Consider the following 180-residue polypeptide: Segregation and condensation protein B (180 aa).

It belongs to the ScpB family. Homodimer. Homodimerization may be required to stabilize the binding of ScpA to the Smc head domains. Component of a cohesin-like complex composed of ScpA, ScpB and the Smc homodimer, in which ScpA and ScpB bind to the head domain of Smc. The presence of the three proteins is required for the association of the complex with DNA.

The protein localises to the cytoplasm. Functionally, participates in chromosomal partition during cell division. May act via the formation of a condensin-like complex containing Smc and ScpA that pull DNA away from mid-cell into both cell halves. This is Segregation and condensation protein B from Staphylococcus aureus (strain USA300).